The following is a 424-amino-acid chain: Serine--tRNA ligase (424 aa).

231 to 233 (TAE) provides a ligand contact to L-serine. Position 262-264 (262-264 (RSE)) interacts with ATP. Glutamate 285 is an L-serine binding site. Residue 349-352 (EISS) participates in ATP binding. Serine 385 is a binding site for L-serine.

This sequence belongs to the class-II aminoacyl-tRNA synthetase family. Type-1 seryl-tRNA synthetase subfamily. Homodimer. The tRNA molecule binds across the dimer.

The protein resides in the cytoplasm. The enzyme catalyses tRNA(Ser) + L-serine + ATP = L-seryl-tRNA(Ser) + AMP + diphosphate + H(+). The catalysed reaction is tRNA(Sec) + L-serine + ATP = L-seryl-tRNA(Sec) + AMP + diphosphate + H(+). Its pathway is aminoacyl-tRNA biosynthesis; selenocysteinyl-tRNA(Sec) biosynthesis; L-seryl-tRNA(Sec) from L-serine and tRNA(Sec): step 1/1. Catalyzes the attachment of serine to tRNA(Ser). Is also able to aminoacylate tRNA(Sec) with serine, to form the misacylated tRNA L-seryl-tRNA(Sec), which will be further converted into selenocysteinyl-tRNA(Sec). The protein is Serine--tRNA ligase of Bacillus cytotoxicus (strain DSM 22905 / CIP 110041 / 391-98 / NVH 391-98).